A 207-amino-acid polypeptide reads, in one-letter code: MSEALSDEALLELAEHIAVRRENDVISTQAVGELTVNATLSGVIGLIEFLRNDPNCRFSTLIDITAVDNPARPARFDVVYHLLSMYQNQRIRVKVQVREDELVPSLIGVFPGANWYEREVFDLFGILFSGHSDLRRILTDYGFRGHPLRKDFPTTGYVEVRWSDIEKRVVYEPVNLVQEYRQFDFLSPWEGAKYVLPGDEKAPEAKK.

It belongs to the complex I 30 kDa subunit family. NDH-1 is composed of at least 14 different subunits, Nqo1 to Nqo14. The complex has a L-shaped structure, with the hydrophobic arm (subunits Nqo7, Nqo8, Nqo10 to Nqo14) embedded in the inner membrane and the hydrophilic peripheral arm (subunits Nqo1 to Nqo6, Nqo9) protruding into the bacterial cytoplasm. The hydrophilic domain contains all the redox centers.

The protein localises to the cell inner membrane. The enzyme catalyses a quinone + NADH + 5 H(+)(in) = a quinol + NAD(+) + 4 H(+)(out). NDH-1 shuttles electrons from NADH, via FMN and iron-sulfur (Fe-S) centers, to quinones in the respiratory chain. The immediate electron acceptor for the enzyme in this species is believed to be ubiquinone. Couples the redox reaction to proton translocation (for every two electrons transferred, four hydrogen ions are translocated across the cytoplasmic membrane), and thus conserves the redox energy in a proton gradient. The protein is NADH-quinone oxidoreductase chain 5 (nqo5) of Paracoccus denitrificans.